A 339-amino-acid chain; its full sequence is Transcription initiation factor IIB (339 aa).

The TFIIB-type zinc finger occupies 39–70 (EELICPVCGSKNIIKDYERAEIVCEMCGCVLQ). Cys-43, Cys-46, Cys-62, and Cys-65 together coordinate Zn(2+). Tandem repeats lie at residues 156 to 239 (SELD…SREL) and 250 to 331 (DYVP…ELTE).

Belongs to the TFIIB family.

Its function is as follows. Stabilizes TBP binding to an archaeal box-A promoter. Also responsible for recruiting RNA polymerase II to the pre-initiation complex (DNA-TBP-TFIIB). The sequence is that of Transcription initiation factor IIB from Methanococcus maripaludis (strain C7 / ATCC BAA-1331).